A 177-amino-acid polypeptide reads, in one-letter code: tRNA (cytidine(56)-2'-O)-methyltransferase (177 aa).

Residues L83 and 108–112 (GAEKV) each bind S-adenosyl-L-methionine.

It belongs to the aTrm56 family. As to quaternary structure, homodimer.

The protein resides in the cytoplasm. It carries out the reaction cytidine(56) in tRNA + S-adenosyl-L-methionine = 2'-O-methylcytidine(56) in tRNA + S-adenosyl-L-homocysteine + H(+). Functionally, specifically catalyzes the AdoMet-dependent 2'-O-ribose methylation of cytidine at position 56 in tRNAs. In Nitrosopumilus maritimus (strain SCM1), this protein is tRNA (cytidine(56)-2'-O)-methyltransferase.